The following is a 201-amino-acid chain: Recombination protein RecR (201 aa).

Residues 57-72 (CKYCANFTNKDECDIC) form a C4-type zinc finger. A Toprim domain is found at 80–176 (TKLMIVTTNE…QIYRIGFGIP (97 aa)).

Belongs to the RecR family.

May play a role in DNA repair. It seems to be involved in an RecBC-independent recombinational process of DNA repair. It may act with RecF and RecO. The protein is Recombination protein RecR of Ureaplasma parvum serovar 3 (strain ATCC 27815 / 27 / NCTC 11736).